The sequence spans 593 residues: DNA primase (593 aa).

The segment at 38–62 (CPFHQEKTPSFTVSDSKRFFYCFGC) adopts a CHC2-type zinc-finger fold. In terms of domain architecture, Toprim spans 250 to 332 (NRSILVEGYF…EKKISFIRLP (83 aa)). Mg(2+) contacts are provided by glutamate 256, aspartate 300, and aspartate 302.

The protein belongs to the DnaG primase family. Monomer. Interacts with DnaB. It depends on Zn(2+) as a cofactor. Mg(2+) is required as a cofactor.

The enzyme catalyses ssDNA + n NTP = ssDNA/pppN(pN)n-1 hybrid + (n-1) diphosphate.. Its function is as follows. RNA polymerase that catalyzes the synthesis of short RNA molecules used as primers for DNA polymerase during DNA replication. The protein is DNA primase of Rickettsia typhi (strain ATCC VR-144 / Wilmington).